The following is a 510-amino-acid chain: NAD(P)H-quinone oxidoreductase subunit 2 B, chloroplastic (510 aa).

Helical transmembrane passes span 24-44, 57-77, 99-119, 124-144, 149-169, 183-203, 227-247, 295-315, 323-343, 354-374, 395-415, 418-438, and 484-504; these read LLLF…GLIL, IPWL…ALLF, IFQF…VEYI, MAIA…MFLC, LITI…LSGY, YLLM…WLYG, PGIS…LSPA, WHLL…LIAI, MLAY…IVGD, YMLF…LFGL, ALSL…AGFF, LHLF…IGLL, and MIVC…IIAI.

It belongs to the complex I subunit 2 family. NDH is composed of at least 16 different subunits, 5 of which are encoded in the nucleus.

Its subcellular location is the plastid. The protein resides in the chloroplast thylakoid membrane. The catalysed reaction is a plastoquinone + NADH + (n+1) H(+)(in) = a plastoquinol + NAD(+) + n H(+)(out). It carries out the reaction a plastoquinone + NADPH + (n+1) H(+)(in) = a plastoquinol + NADP(+) + n H(+)(out). Functionally, NDH shuttles electrons from NAD(P)H:plastoquinone, via FMN and iron-sulfur (Fe-S) centers, to quinones in the photosynthetic chain and possibly in a chloroplast respiratory chain. The immediate electron acceptor for the enzyme in this species is believed to be plastoquinone. Couples the redox reaction to proton translocation, and thus conserves the redox energy in a proton gradient. The sequence is that of NAD(P)H-quinone oxidoreductase subunit 2 B, chloroplastic from Gossypium hirsutum (Upland cotton).